Here is a 203-residue protein sequence, read N- to C-terminus: Orotate phosphoribosyltransferase (203 aa).

5-phospho-alpha-D-ribose 1-diphosphate-binding positions include Arg-94, Lys-98, His-100, and 120 to 128 (EDLISTGGS). Ser-124 lines the orotate pocket.

It belongs to the purine/pyrimidine phosphoribosyltransferase family. PyrE subfamily. Homodimer. Requires Mg(2+) as cofactor.

It catalyses the reaction orotidine 5'-phosphate + diphosphate = orotate + 5-phospho-alpha-D-ribose 1-diphosphate. It participates in pyrimidine metabolism; UMP biosynthesis via de novo pathway; UMP from orotate: step 1/2. In terms of biological role, catalyzes the transfer of a ribosyl phosphate group from 5-phosphoribose 1-diphosphate to orotate, leading to the formation of orotidine monophosphate (OMP). This chain is Orotate phosphoribosyltransferase, found in Staphylococcus aureus (strain COL).